The following is a 412-amino-acid chain: Probable ribonuclease FAU-1 (412 aa).

It belongs to the FAU-1 family.

Probable RNase involved in rRNA stability through maturation and/or degradation of precursor rRNAs. Binds to RNA in loop regions with AU-rich sequences. This is Probable ribonuclease FAU-1 from Sulfurisphaera tokodaii (strain DSM 16993 / JCM 10545 / NBRC 100140 / 7) (Sulfolobus tokodaii).